We begin with the raw amino-acid sequence, 34 residues long: MSDIN-like toxin proprotein 7 (34 aa).

A propeptide spanning residues 1–10 (MSDINATRLP) is cleaved from the precursor. A cross-link (cyclopeptide (Ala-Pro)) is located at residues 11-17 (AWLTDCP). Positions 18-34 (CVGDDVNRLLTRGESLC) are excised as a propeptide.

The protein belongs to the MSDIN fungal toxin family. In terms of processing, processed by the macrocyclase-peptidase enzyme POPB to yield a toxic cyclic heptapeptide. POPB first removes 10 residues from the N-terminus. Conformational trapping of the remaining peptide forces the enzyme to release this intermediate rather than proceed to macrocyclization. The enzyme rebinds the remaining peptide in a different conformation and catalyzes macrocyclization of the N-terminal 7 residues. As to expression, expressed in basidiocarps.

Its function is as follows. Probable toxin that belongs to the MSDIN-like toxin family responsible for a large number of food poisoning cases and deaths. This is MSDIN-like toxin proprotein 7 from Amanita exitialis (Guangzhou destroying angel).